The following is a 25-amino-acid chain: Brevinin-2R (25 aa).

A disulfide bridge links Cys-19 with Cys-25.

The protein belongs to the frog skin active peptide (FSAP) family. Brevinin subfamily. In terms of tissue distribution, expressed by the skin glands.

It localises to the secreted. In terms of biological role, cytotoxic to cancer cells, acts via the activation of the lysosomal-mitochondrial death pathway and autophagy-like cell death. Does not show significant hemolytic activity. The polypeptide is Brevinin-2R (Pelophylax ridibundus (Marsh frog)).